Reading from the N-terminus, the 164-residue chain is Cyclic pyranopterin monophosphate synthase (164 aa).

Residues 75–77 and 112–113 each bind substrate; these read MAH and ME. Residue Asp127 is part of the active site.

This sequence belongs to the MoaC family. As to quaternary structure, homohexamer; trimer of dimers.

It catalyses the reaction (8S)-3',8-cyclo-7,8-dihydroguanosine 5'-triphosphate = cyclic pyranopterin phosphate + diphosphate. The protein operates within cofactor biosynthesis; molybdopterin biosynthesis. Functionally, catalyzes the conversion of (8S)-3',8-cyclo-7,8-dihydroguanosine 5'-triphosphate to cyclic pyranopterin monophosphate (cPMP). This is Cyclic pyranopterin monophosphate synthase from Desulforamulus reducens (strain ATCC BAA-1160 / DSM 100696 / MI-1) (Desulfotomaculum reducens).